The primary structure comprises 328 residues: Malate dehydrogenase (328 aa).

12–18 (GAAGQIG) contributes to the NAD(+) binding site. Substrate is bound by residues arginine 95 and arginine 101. Residues asparagine 108, glutamine 115, and 132–134 (VGN) contribute to the NAD(+) site. Asparagine 134 and arginine 165 together coordinate substrate. Catalysis depends on histidine 190, which acts as the Proton acceptor.

This sequence belongs to the LDH/MDH superfamily. MDH type 2 family.

It catalyses the reaction (S)-malate + NAD(+) = oxaloacetate + NADH + H(+). Its function is as follows. Catalyzes the reversible oxidation of malate to oxaloacetate. In Acidovorax ebreus (strain TPSY) (Diaphorobacter sp. (strain TPSY)), this protein is Malate dehydrogenase.